A 259-amino-acid chain; its full sequence is HTH-type transcriptional regulator TtgV (259 aa).

Residues 14–76 enclose the HTH iclR-type domain; it reads IQVIARAASI…GPAGGFRLGP (63 aa). The segment at residues 36–59 is a DNA-binding region (H-T-H motif); the sequence is LAAIAQLVGLPRSTVQRIINALEE. In terms of domain architecture, IclR-ED spans 89–253; that stretch reads ILSLVKPYLR…KLNIERAIGR (165 aa).

Its function is as follows. Represses the expression of the ttgGHI and ttgVW operons. Binds to the ttgGHI / ttgVW intergenic region, probably preventing binding of RNA polymerase; ttgV dissociates from this region in the presence of 1-hexanol. The protein is HTH-type transcriptional regulator TtgV (ttgV) of Pseudomonas putida (strain DOT-T1E).